A 473-amino-acid chain; its full sequence is Ribosomal RNA small subunit methyltransferase F (473 aa).

S-adenosyl-L-methionine is bound by residues 123–129, glutamate 147, aspartate 174, and aspartate 192; that span reads AAAPGSK. The active-site Nucleophile is the cysteine 245.

Belongs to the class I-like SAM-binding methyltransferase superfamily. RsmB/NOP family.

Its subcellular location is the cytoplasm. It catalyses the reaction cytidine(1407) in 16S rRNA + S-adenosyl-L-methionine = 5-methylcytidine(1407) in 16S rRNA + S-adenosyl-L-homocysteine + H(+). Functionally, specifically methylates the cytosine at position 1407 (m5C1407) of 16S rRNA. The polypeptide is Ribosomal RNA small subunit methyltransferase F (Vibrio cholerae serotype O1 (strain ATCC 39315 / El Tor Inaba N16961)).